The chain runs to 534 residues: Unguisins hydrolase ungD' (534 aa).

It belongs to the peptidase S12 family.

The protein operates within secondary metabolite biosynthesis. Its function is as follows. Hydrolase; part of the gene cluster that mediates the biosynthesis of the unguisins, gamma-aminobutyric acid (GABA)-containing fungal cyclic heptapeptides with the amino acid sequence cyclo-(D-Ala1-D-Val2-L-Leu3-beta-MePhe4-D-Ala5-D-Trp6-GABA7) for unguisin H and cyclo-(D-Ala1-D-Ala2-L-Leu3-beta-MePhe4-D-Ala5-D-Trp6-GABA7) for unguisin I. Within the pathway, the hydrolase ungD' catalyzes the hydrolysis between the D-tryptophan and GABA residues of unguisins H and I to produce the corresponding linear peptides. The alanine racemase ungC' catalyzes the interconversion of L-alanine and D-alanine, providing the D-alanine which is accepted by the first adenylation domain of the nonribosomal peptide synthetase (NRPS) ungA', whereas the methyltransferase ungE' provides the (2R,3R)-beta-methylphenylalanine residue incorporated by the module 4. UngA' is the main enzyme within the cluster which condenses the 7 residues using its respective 7 modules. The terminal condensation domain (Ct) is involved in cyclization with D-alanine and thereby releasing of unguisins H and I. This Aspergillus campestris (strain IBT 28561) protein is Unguisins hydrolase ungD'.